Consider the following 464-residue polypeptide: UDP-N-acetylmuramate--L-alanine ligase (464 aa).

123 to 129 lines the ATP pocket; sequence GTHGKTT.

This sequence belongs to the MurCDEF family.

Its subcellular location is the cytoplasm. It catalyses the reaction UDP-N-acetyl-alpha-D-muramate + L-alanine + ATP = UDP-N-acetyl-alpha-D-muramoyl-L-alanine + ADP + phosphate + H(+). Its pathway is cell wall biogenesis; peptidoglycan biosynthesis. Functionally, cell wall formation. This Carboxydothermus hydrogenoformans (strain ATCC BAA-161 / DSM 6008 / Z-2901) protein is UDP-N-acetylmuramate--L-alanine ligase.